A 433-amino-acid polypeptide reads, in one-letter code: Coiled-coil domain-containing protein 71 (433 aa).

Ser-125 is modified (phosphoserine). Disordered regions lie at residues 204 to 256, 284 to 310, and 325 to 396; these read LKVR…GCSA, QTKT…KAAV, and KAAQ…RKSQ. Composition is skewed to basic residues over residues 216–230 and 288–306; these read KAPR…KHLT and VRVR…RAKA. A coiled-coil region spans residues 260 to 330; that stretch reads KTVQAQASQT…QAKAKAAQTK (71 aa).

The polypeptide is Coiled-coil domain-containing protein 71 (Ccdc71) (Mus musculus (Mouse)).